The primary structure comprises 204 residues: Glideosome-associated protein 45 (204 aa).

The segment at 1–86 (MGNKCSRSKV…KEEIDYATQE (86 aa)) is disordered. G2 is lipidated: N-myristoyl glycine. Residues 2–29 (GNKCSRSKVKEPKRKDIDELAERENLKK) form a targets GAP45 to the cell membrane; however, dispensable for the formation of the glideosome complex and the association with the inner membrane complex region. Basic and acidic residues predominate over residues 9 to 53 (KVKEPKRKDIDELAERENLKKQSEEIIEEKPEEVVEQVEETHEEP). Residues 54–73 (LEQEQELDEQKIEEEEEEPE) show a composition bias toward acidic residues. Position 89 is a phosphoserine; by CPK10 (S89). S103 is modified (phosphoserine; by CPK10 and PKB). A Phosphoserine; by CPK10 modification is found at S149.

As to quaternary structure, component of the glideosome complex composed of GAP50, GAP45, MTIP and MyoA; the complex is formed during the late schizont stage and in merozoites. MyoA, MTIP and GAP45 probably form an initial complex in the cytoplasm which is then recruited to the outer face of the inner membrane complex via the interaction with GAP50. Interacts with GAP50; the interaction is independent of GAP45 phosphorylation status and can also occur independently of the formation of the glideosome complex. In terms of processing, phosphorylated at multiple sites. Phosphorylation increases during the schizont stage and peaks in segmented merozoites. May be phosphorylated by PKB. In schizonts, phosphorylated at Ser-89 and Ser-149 in response to phospholipase C-mediated calcium release. Phosphorylation at Ser-149 begins in early schizonts while phosphorylation at Ser-103 begins in late schizonts. Phosphorylation at Ser-89, Ser-103 and Ser-149 appears to be dispensable for GAP45 inner membrane complex localization or GAP45 inclusion in the glideosome complex. Phosphorylation is not required for interaction with GAP50; however, it may regulate the interaction with MTIP and MyoA. Post-translationally, N-myristoylated by NMT. N-myristoylation may contribute to the targeting of GAP45 to the inner membrane complex with the subsequent palmitoylation strengthening the interaction with the membrane. Palmitoylated. Palmitoylation appears to follow N-myristoylation and may strengthen the interaction with the inner membrane complex.

Its subcellular location is the inner membrane complex. Component of the glideosome complex, an inner membrane complex structure involved in parasite gliding motility and host cell invasion. During the asexual blood stage, required in schizonts to recruit MTIP and MyoA to the inner membrane complex where they assemble with GAP50 to form the glideosome complex. By regulating the formation of the glideosome, plays an essential role during merozoite invasion of host erythrocytes. This is Glideosome-associated protein 45 from Plasmodium falciparum (isolate 3D7).